Here is a 247-residue protein sequence, read N- to C-terminus: MNDEASTPIQEDLKEESAVDLAQEAKPTSDEPSLSNVAEGSQEAGAETDVTSSDAKDSSSQALDNEARLEQLEREHETLNSQYMRIAADFDNFRKRQSRDQDDLRLQLQCNTLSSILPVVDNFDRARQQLNPEGEEAQALHKSYQGLYKQLVDVLKQLGVAPMRVVGQTFDPSLHEAVLREPSDELAEDIIVEELQRGYHLNGRVLRHALVKVSMGPGPKDDGEETITEQSLEGDNTTDQQSSEKSD.

Disordered regions lie at residues M1 to D64 and S214 to D247. 3 stretches are compositionally biased toward polar residues: residues D30–E39, D49–L63, and T228–Q241.

The protein belongs to the GrpE family. As to quaternary structure, homodimer.

The protein resides in the cytoplasm. In terms of biological role, participates actively in the response to hyperosmotic and heat shock by preventing the aggregation of stress-denatured proteins, in association with DnaK and GrpE. It is the nucleotide exchange factor for DnaK and may function as a thermosensor. Unfolded proteins bind initially to DnaJ; upon interaction with the DnaJ-bound protein, DnaK hydrolyzes its bound ATP, resulting in the formation of a stable complex. GrpE releases ADP from DnaK; ATP binding to DnaK triggers the release of the substrate protein, thus completing the reaction cycle. Several rounds of ATP-dependent interactions between DnaJ, DnaK and GrpE are required for fully efficient folding. The protein is Protein GrpE of Prochlorococcus marinus (strain MIT 9211).